The primary structure comprises 135 residues: Transcription antitermination protein NusB (135 aa).

The protein belongs to the NusB family.

Its function is as follows. Involved in transcription antitermination. Required for transcription of ribosomal RNA (rRNA) genes. Binds specifically to the boxA antiterminator sequence of the ribosomal RNA (rrn) operons. The sequence is that of Transcription antitermination protein NusB from Shewanella piezotolerans (strain WP3 / JCM 13877).